A 147-amino-acid chain; its full sequence is Protegrin-2 (147 aa).

An N-terminal signal peptide occupies residues 1–29; that stretch reads METQRASLCLGRWSLWLLLLALVVPSASA. The propeptide occupies 30–130; that stretch reads QALSYREAVL…DITCNEVQGV (101 aa). The segment at 61–80 is disordered; that stretch reads DQPPKADEDPGTPKPVSFTV. 4 cysteine pairs are disulfide-bonded: Cys-85/Cys-96, Cys-107/Cys-124, Cys-136/Cys-145, and Cys-138/Cys-143. Residue Val-146 is modified to Valine amide.

Belongs to the cathelicidin family.

It is found in the secreted. Functionally, microbicidal activity. Active against E.coli, Listeria monocytogenes and C.albicans, in vitro. This chain is Protegrin-2 (NPG2), found in Sus scrofa (Pig).